A 216-amino-acid chain; its full sequence is Adenylate kinase (216 aa).

Glycine 10–threonine 15 serves as a coordination point for ATP. The segment at serine 30–valine 59 is NMP. AMP-binding positions include threonine 31, arginine 36, glutamine 57–valine 59, glycine 85–arginine 88, and glutamine 92. An LID region spans residues glycine 122–aspartate 159. ATP is bound by residues arginine 123 and threonine 132 to tyrosine 133. Residues arginine 156 and arginine 167 each contribute to the AMP site. ATP is bound at residue glycine 202.

This sequence belongs to the adenylate kinase family. In terms of assembly, monomer.

The protein resides in the cytoplasm. The enzyme catalyses AMP + ATP = 2 ADP. It participates in purine metabolism; AMP biosynthesis via salvage pathway; AMP from ADP: step 1/1. Functionally, catalyzes the reversible transfer of the terminal phosphate group between ATP and AMP. Plays an important role in cellular energy homeostasis and in adenine nucleotide metabolism. In Pseudomonas putida (strain GB-1), this protein is Adenylate kinase.